The chain runs to 1195 residues: Cullin-associated NEDD8-dissociated protein 1 (1195 aa).

8 HEAT repeats span residues 1 to 37, 45 to 83, 168 to 206, 397 to 434, 436 to 474, 703 to 742, 846 to 885, and 999 to 1037; these read MHDI…DESA, NQSL…YLSN, NPVT…KVAL, ELLS…TSPR, STNV…FDNT, ETHR…QIPD, QKHI…ACNE, and PILD…EGLE.

The protein belongs to the CAND family.

Functionally, key assembly factor of SCF (SKP1-CUL1-F-box protein) E3 ubiquitin ligase complexes that promotes the exchange of the substrate-recognition F-box subunit in SCF complexes, thereby playing a key role in the cellular repertoire of SCF complexes. Acts as a F-box protein exchange factor. The protein is Cullin-associated NEDD8-dissociated protein 1 (TIP120) of Candida albicans (strain SC5314 / ATCC MYA-2876) (Yeast).